Consider the following 340-residue polypeptide: MYG1 protein C27H6.8 (340 aa).

It belongs to the MYG1 family.

This is MYG1 protein C27H6.8 from Caenorhabditis elegans.